Reading from the N-terminus, the 210-residue chain is Proteasome subunit beta (210 aa).

A propeptide spans Met-1 to Gly-9 (removed in mature form; by autocatalysis). The active-site Nucleophile is the Thr-10.

The protein belongs to the peptidase T1B family. As to quaternary structure, the 20S proteasome core is composed of 14 alpha and 14 beta subunits that assemble into four stacked heptameric rings, resulting in a barrel-shaped structure. The two inner rings, each composed of seven catalytic beta subunits, are sandwiched by two outer rings, each composed of seven alpha subunits. The catalytic chamber with the active sites is on the inside of the barrel. Has a gated structure, the ends of the cylinder being occluded by the N-termini of the alpha-subunits. Is capped at one or both ends by the proteasome regulatory ATPase, PAN.

The protein resides in the cytoplasm. It catalyses the reaction Cleavage of peptide bonds with very broad specificity.. With respect to regulation, the formation of the proteasomal ATPase PAN-20S proteasome complex, via the docking of the C-termini of PAN into the intersubunit pockets in the alpha-rings, triggers opening of the gate for substrate entry. Interconversion between the open-gate and close-gate conformations leads to a dynamic regulation of the 20S proteasome proteolysis activity. Component of the proteasome core, a large protease complex with broad specificity involved in protein degradation. This chain is Proteasome subunit beta, found in Methanosarcina thermophila.